Consider the following 518-residue polypeptide: Cytochrome P450 704C1 (518 aa).

Helical transmembrane passes span 5 to 25 (ILTM…WIAS) and 299 to 319 (VILN…SWFI). Cys461 serves as a coordination point for heme.

This sequence belongs to the cytochrome P450 family. Heme serves as cofactor.

Its subcellular location is the membrane. The protein is Cytochrome P450 704C1 (CYP704C1) of Pinus taeda (Loblolly pine).